A 290-amino-acid polypeptide reads, in one-letter code: N-acetylmannosamine kinase (290 aa).

ATP contacts are provided by residues 6-13 (ALDIGGTK) and 132-139 (GVGGGIIL). 4 residues coordinate Zn(2+): His156, Cys166, Cys168, and Cys173.

Belongs to the ROK (NagC/XylR) family. NanK subfamily. In terms of assembly, homodimer.

It catalyses the reaction an N-acyl-D-mannosamine + ATP = an N-acyl-D-mannosamine 6-phosphate + ADP + H(+). The protein operates within amino-sugar metabolism; N-acetylneuraminate degradation; D-fructose 6-phosphate from N-acetylneuraminate: step 2/5. Its function is as follows. Catalyzes the phosphorylation of N-acetylmannosamine (ManNAc) to ManNAc-6-P. This Yersinia pseudotuberculosis serotype O:3 (strain YPIII) protein is N-acetylmannosamine kinase.